The primary structure comprises 127 residues: Fluoride-specific ion channel FluC 2 (127 aa).

4 helical membrane-spanning segments follow: residues 4–24 (IIAI…LSLL), 31–51 (FWIT…ITNL), 62–82 (IVIG…TFTF), and 94–114 (VLAL…GLAG). Na(+) contacts are provided by Gly72 and Thr75.

It belongs to the fluoride channel Fluc/FEX (TC 1.A.43) family.

The protein resides in the cell membrane. The enzyme catalyses fluoride(in) = fluoride(out). Its activity is regulated as follows. Na(+) is not transported, but it plays an essential structural role and its presence is essential for fluoride channel function. Fluoride-specific ion channel. Important for reducing fluoride concentration in the cell, thus reducing its toxicity. The chain is Fluoride-specific ion channel FluC 2 from Lactiplantibacillus plantarum (strain ATCC BAA-793 / NCIMB 8826 / WCFS1) (Lactobacillus plantarum).